The chain runs to 382 residues: Lipid-A-disaccharide synthase (382 aa).

It belongs to the LpxB family.

The enzyme catalyses 2-N,3-O-bis[(3R)-3-hydroxytetradecanoyl]-alpha-D-glucosaminyl 1-phosphate + UDP-2-N,3-O-bis[(3R)-3-hydroxytetradecanoyl]-alpha-D-glucosamine = lipid A disaccharide (E. coli) + UDP + H(+). It catalyses the reaction a lipid X + a UDP-2-N,3-O-bis[(3R)-3-hydroxyacyl]-alpha-D-glucosamine = a lipid A disaccharide + UDP + H(+). Its pathway is glycolipid biosynthesis; lipid IV(A) biosynthesis; lipid IV(A) from (3R)-3-hydroxytetradecanoyl-[acyl-carrier-protein] and UDP-N-acetyl-alpha-D-glucosamine: step 5/6. Condensation of UDP-2,3-diacylglucosamine and 2,3-diacylglucosamine-1-phosphate to form lipid A disaccharide, a precursor of lipid A, a phosphorylated glycolipid that anchors the lipopolysaccharide to the outer membrane of the cell. This Escherichia fergusonii (strain ATCC 35469 / DSM 13698 / CCUG 18766 / IAM 14443 / JCM 21226 / LMG 7866 / NBRC 102419 / NCTC 12128 / CDC 0568-73) protein is Lipid-A-disaccharide synthase.